The sequence spans 161 residues: Putative allophycocyanin subunit alpha 2 (161 aa).

Position 71 is an N4-methylasparagine (N71). C81 is a binding site for (2R,3E)-phycocyanobilin.

It belongs to the phycobiliprotein family. Heterohexamer of two alpha chains, one alpha-B chain and three beta chains. Post-translationally, contains one covalently linked phycocyanobilin chromophore. The chromophore is added by phycocyanobilin lyase CpcS 1.

Its subcellular location is the cellular thylakoid membrane. Its function is as follows. Light-harvesting photosynthetic bile pigment-protein from the phycobiliprotein complex. Allophycocyanin has a maximum absorption at approximately 650 to 653 nanometers. The polypeptide is Putative allophycocyanin subunit alpha 2 (apcA2) (Nostoc sp. (strain PCC 7120 / SAG 25.82 / UTEX 2576)).